Consider the following 106-residue polypeptide: Small ribosomal subunit protein bS20 (106 aa).

Residues 1–32 (MAQKKPKRNLSALKRHRQSLKRRLRNKAKKSA) form a disordered region.

Part of the 30S ribosomal subunit.

Functionally, one of the primary rRNA binding proteins, it binds directly to 16S rRNA where it nucleates assembly of the bottom of the body of the 30S subunit, by binding to several RNA helices of the 16S rRNA. The polypeptide is Small ribosomal subunit protein bS20 (rpsT) (Thermus thermophilus (strain ATCC 27634 / DSM 579 / HB8)).